Consider the following 37-residue polypeptide: Photosystem I reaction center subunit VIII (37 aa).

Residues 9 to 29 (SILVTLVGLVFPAFAMASLFL) traverse the membrane as a helical segment.

Belongs to the PsaI family.

Its subcellular location is the plastid. It localises to the chloroplast thylakoid membrane. May help in the organization of the PsaL subunit. The protein is Photosystem I reaction center subunit VIII of Pelargonium hortorum (Common geranium).